The chain runs to 346 residues: MICVGIESTAEKLGVGVVTDDGEILVNVKAQYIPPPGSGILPREAAEHHSRELPELLERALKNAGVEPEDIDLVAYSQGPGLGPCLRVGATAARTLALTLEVPLAPVNHCVAHVEIGKLAARQDGFDFDEPVTLYVSGGNTQVLALKAGRYRVFGETLDLPVGNMLDTFARKVGLPHPGGPEIERLAEEGEPVELPYTVRGTDVSFSGLLTAALRRYEQGDRLEDVCAGLQETAFAMLVEITERAAAQLGRDEILLTGGVAANRRLSEMMHEMAEDRGAEAYTVPPELAGDNGAMIAWTGILVHEHGLSIPPDEIPEKAIVKQRYRVDEAPVPWAARPSRSADSQG.

His109, His113, and Tyr135 together coordinate Fe cation. Residues 135–139, Asp167, Gly180, Glu184, and Asn263 each bind substrate; that span reads YVSGG. Fe cation is bound at residue Asp291.

This sequence belongs to the KAE1 / TsaD family. As to quaternary structure, monomer. Component of the KEOPS complex that consists of Kae1, Bud32, Cgi121 and Pcc1; the whole complex dimerizes. It depends on Fe(2+) as a cofactor.

Its subcellular location is the cytoplasm. The catalysed reaction is L-threonylcarbamoyladenylate + adenosine(37) in tRNA = N(6)-L-threonylcarbamoyladenosine(37) in tRNA + AMP + H(+). In terms of biological role, required for the formation of a threonylcarbamoyl group on adenosine at position 37 (t(6)A37) in tRNAs that read codons beginning with adenine. Is a component of the KEOPS complex that is probably involved in the transfer of the threonylcarbamoyl moiety of threonylcarbamoyl-AMP (TC-AMP) to the N6 group of A37. Kae1 likely plays a direct catalytic role in this reaction, but requires other protein(s) of the complex to fulfill this activity. This is tRNA N6-adenosine threonylcarbamoyltransferase from Methanopyrus kandleri (strain AV19 / DSM 6324 / JCM 9639 / NBRC 100938).